Here is a 184-residue protein sequence, read N- to C-terminus: UPF0316 protein BLi00691/BL01474 (184 aa).

Helical transmembrane passes span 9-29 (GVIM…FLTL), 41-61 (LAAF…GLVL), and 67-87 (IQNV…GTKI).

The protein belongs to the UPF0316 family.

The protein localises to the cell membrane. The protein is UPF0316 protein BLi00691/BL01474 of Bacillus licheniformis (strain ATCC 14580 / DSM 13 / JCM 2505 / CCUG 7422 / NBRC 12200 / NCIMB 9375 / NCTC 10341 / NRRL NRS-1264 / Gibson 46).